We begin with the raw amino-acid sequence, 71 residues long: UPF0435 protein SERP1418 (71 aa).

This sequence belongs to the UPF0435 family.

This is UPF0435 protein SERP1418 from Staphylococcus epidermidis (strain ATCC 35984 / DSM 28319 / BCRC 17069 / CCUG 31568 / BM 3577 / RP62A).